Consider the following 356-residue polypeptide: Trans-enoyl reductase pgmF (356 aa).

Residues 57 to 60, 175 to 178, 198 to 201, tyrosine 216, 261 to 262, and 342 to 343 contribute to the NADP(+) site; these read VDFK, SGGC, STPN, VG, and AK.

This sequence belongs to the zinc-containing alcohol dehydrogenase family.

FAD-linked oxidoreductase; part of the gene cluster that mediates the biosynthesis of pleosporalin A, ascomycone A, as well as a third cryptic naphthoquinone derived pigment, all responsible for the coloration of conidia. The pathway begins with the biosynthesis of the cyclized heptaketide 3-acetonyl-1,6,8-trihydroxy-2-naphthaldehyde by the NR-PKS pgmA. The C-6 hydroxyl group is further methylated by the O-methyltransferase pgmB to yield fusarubinaldehyde which is in turn oxidized by the cytochrome P450 monooxygenase pgmC at C-9. The C-1 hydroxyl group is then methylated spontaneously. Although pgmE, pgmD and pgmH are essential for the production of pleosporalin A, it is not the case for the 2 other final products and it remains difficult to assign a specific function to each enzyme. PgmF and pgmG seem not to be involved in pigment biosynthesis although they were regulated by the cluster-specific transcription factor pgmR. The protein is Trans-enoyl reductase pgmF of Aspergillus terreus.